The primary structure comprises 227 residues: uncharacterized protein (227 aa).

The signal sequence occupies residues methionine 1–alanine 21.

This is an uncharacterized protein from Haemophilus influenzae (strain ATCC 51907 / DSM 11121 / KW20 / Rd).